We begin with the raw amino-acid sequence, 316 residues long: Cuticle collagen 7 (316 aa).

An N-terminal signal peptide occupies residues 1–34; sequence MSSATFLSVMAGLSGIVVFGALISVFHIYSDINS. 2 disordered regions span residues 78-269 and 281-316; these read KQSQ…DAAY and HRNV…HVQA. Residues 79-90 show a composition bias toward polar residues; the sequence is QSQCNCGQQASN. Triple-helical region regions lie at residues 94-126, 139-198, and 204-263; these read GPPG…AGPS, GLPG…PGKS, and GLPG…DGTP. 3 stretches are compositionally biased toward low complexity: residues 110-125, 137-147, and 177-198; these read QPGQ…VAGP, PQGLPGPAGVP, and AGSA…PGKS. Positions 209-221 are enriched in pro residues; it reads SGAPGPQGPPGAP. Residues 241 to 260 show a composition bias toward low complexity; that stretch reads PNGQPGHPGQDGQPGAPGND.

It belongs to the cuticular collagen family. In terms of assembly, collagen polypeptide chains are complexed within the cuticle by disulfide bonds and other types of covalent cross-links.

Its function is as follows. Nematode cuticles are composed largely of collagen-like proteins. The cuticle functions both as an exoskeleton and as a barrier to protect the worm from its environment. This chain is Cuticle collagen 7 (col-7), found in Caenorhabditis elegans.